Reading from the N-terminus, the 162-residue chain is SCF ubiquitin ligase complex protein SKP1b (162 aa).

Serine 2 bears the N-acetylserine mark. Residues 100–162 are interaction with the F-box domain of F-box proteins; it reads ILAANYLDIK…NEWCEDKGGN (63 aa). Proline 143 is modified (4-hydroxyproline). Proline 143 carries an O-linked (GlcNAc...) hydroxyproline glycan.

Belongs to the SKP1 family. Multiprotein complex (SCF) with cullin and F-box-containing protein. Capable of undergoing aggregation. O-linked glycan consists of linear Gal-Gal-Fuc-Gal-GlcNAc. Post-translationally, not glycosylated in prespore cells. In terms of processing, fpaA and fpaB seem to be identically glycosylated. Glycosylation is required for nuclear enrichment. Hydroxylated by phyA.

It is found in the cytoplasm. Its subcellular location is the nucleus. This chain is SCF ubiquitin ligase complex protein SKP1b (fpaB-1), found in Dictyostelium discoideum (Social amoeba).